Consider the following 125-residue polypeptide: Small ribosomal subunit protein bS6 (125 aa).

Residues 99–125 (ASPMVKAREERKPLTEVENNDFEDAEE) form a disordered region. The span at 104-113 (KAREERKPLT) shows a compositional bias: basic and acidic residues. The segment covering 116–125 (ENNDFEDAEE) has biased composition (acidic residues).

It belongs to the bacterial ribosomal protein bS6 family.

In terms of biological role, binds together with bS18 to 16S ribosomal RNA. The chain is Small ribosomal subunit protein bS6 from Histophilus somni (strain 2336) (Haemophilus somnus).